Here is a 371-residue protein sequence, read N- to C-terminus: Aldose sugar dehydrogenase YliI (371 aa).

A signal peptide spans 1–20 (MHRQSFFLVPLICLSSALWA). Gln82 is a binding site for pyrroloquinoline quinone. Catalysis depends on His147, which acts as the Proton acceptor. The PQQ stretch occupies residues 214–215 (RN). The Ca(2+) site is built by Glu240 and Tyr250. Tyr261 serves as a coordination point for pyrroloquinoline quinone. PQQ regions lie at residues 312–314 (ALK) and 341–343 (RIR).

Belongs to the PQQ oxidoreductase GdhB family. In terms of assembly, monomer. It depends on Ca(2+) as a cofactor. The cofactor is pyrroloquinoline quinone.

It localises to the cell outer membrane. Its function is as follows. Aldose sugar dehydrogenase with broad substrate specificity. The physiological substrate is unknown. Can oxidize glucose to gluconolactone. Can also utilize D-arabinose, L-arabinose and 2-deoxy-glucose. Has higher activity towards oligomeric sugars, such as maltose, maltotriose or cellobiose. It may function to input sugar-derived electrons into the respiratory network. In Escherichia coli (strain K12), this protein is Aldose sugar dehydrogenase YliI (yliI).